We begin with the raw amino-acid sequence, 279 residues long: Shikimate dehydrogenase (NADP(+)) (279 aa).

Residues 20-22 (SRS) and threonine 67 contribute to the shikimate site. Lysine 71 (proton acceptor) is an active-site residue. Position 83 (aspartate 83) interacts with NADP(+). Positions 92 and 108 each coordinate shikimate. NADP(+)-binding positions include 134-138 (GAGGA) and leucine 223. Tyrosine 225 serves as a coordination point for shikimate. Position 246 (glycine 246) interacts with NADP(+).

Belongs to the shikimate dehydrogenase family. Homodimer.

It carries out the reaction shikimate + NADP(+) = 3-dehydroshikimate + NADPH + H(+). It functions in the pathway metabolic intermediate biosynthesis; chorismate biosynthesis; chorismate from D-erythrose 4-phosphate and phosphoenolpyruvate: step 4/7. Involved in the biosynthesis of the chorismate, which leads to the biosynthesis of aromatic amino acids. Catalyzes the reversible NADPH linked reduction of 3-dehydroshikimate (DHSA) to yield shikimate (SA). In Cereibacter sphaeroides (strain ATCC 17029 / ATH 2.4.9) (Rhodobacter sphaeroides), this protein is Shikimate dehydrogenase (NADP(+)).